The chain runs to 103 residues: Small ribosomal subunit protein uS10 (103 aa).

The protein belongs to the universal ribosomal protein uS10 family. In terms of assembly, part of the 30S ribosomal subunit.

Involved in the binding of tRNA to the ribosomes. This chain is Small ribosomal subunit protein uS10, found in Neorickettsia sennetsu (strain ATCC VR-367 / Miyayama) (Ehrlichia sennetsu).